Here is a 329-residue protein sequence, read N- to C-terminus: Glutamine synthetase (329 aa).

Residues 4 to 86 (YKLEYIWLDA…VMCEVMMPDA (83 aa)) enclose the GS beta-grasp domain. Residues 89-329 (PHASNTRATV…GDPYQMLLSS (241 aa)) form the GS catalytic domain. Positions 109 and 111 each coordinate Mg(2+). Residue E167 coordinates ATP. Residues E172 and E179 each contribute to the Mg(2+) site. Residue E278 participates in L-glutamate binding.

The protein belongs to the glutamine synthetase family. Homooctamer and homotetramer. Mg(2+) is required as a cofactor.

It is found in the cytoplasm. The catalysed reaction is L-glutamate + NH4(+) + ATP = L-glutamine + ADP + phosphate + H(+). Its function is as follows. Catalyzes the ATP-dependent biosynthesis of glutamine from glutamate and ammonia. The sequence is that of Glutamine synthetase from Rhizobium meliloti (Ensifer meliloti).